A 499-amino-acid chain; its full sequence is L-arabinose isomerase (499 aa).

The Mn(2+) site is built by Glu-306, Glu-333, His-350, and His-449.

Belongs to the arabinose isomerase family. Mn(2+) is required as a cofactor.

It carries out the reaction beta-L-arabinopyranose = L-ribulose. It functions in the pathway carbohydrate degradation; L-arabinose degradation via L-ribulose; D-xylulose 5-phosphate from L-arabinose (bacterial route): step 1/3. In terms of biological role, catalyzes the conversion of L-arabinose to L-ribulose. The sequence is that of L-arabinose isomerase from Aeromonas hydrophila subsp. hydrophila (strain ATCC 7966 / DSM 30187 / BCRC 13018 / CCUG 14551 / JCM 1027 / KCTC 2358 / NCIMB 9240 / NCTC 8049).